The following is a 171-amino-acid chain: Transcriptional repressor NrdR (171 aa).

The disordered stretch occupies residues 1–21; sequence MQCPHCQHTDSRVLESRSSEN. A zinc finger spans residues 3 to 34; sequence CPHCQHTDSRVLESRSSENGQSIRRRRECLQC. The segment covering 7 to 18 has biased composition (basic and acidic residues); that stretch reads QHTDSRVLESRS. Positions 49–139 constitute an ATP-cone domain; sequence ITVIKKDGKR…VYGNFQGIRD (91 aa).

It belongs to the NrdR family. Requires Zn(2+) as cofactor.

Its function is as follows. Negatively regulates transcription of bacterial ribonucleotide reductase nrd genes and operons by binding to NrdR-boxes. The polypeptide is Transcriptional repressor NrdR (Microcystis aeruginosa (strain NIES-843 / IAM M-2473)).